Here is a 551-residue protein sequence, read N- to C-terminus: Probable aldehyde dehydrogenase (551 aa).

278–283 (GSSRVA) is an NAD(+) binding site. The Proton acceptor role is filled by Glu297. Catalysis depends on Cys332, which acts as the Nucleophile.

Belongs to the aldehyde dehydrogenase family. As to expression, in uninfected plants, highest levels found in stems. In plants infected with the flax rust, highest levels in leaves. Higher levels of expression in infected leaves than uninfected stems.

It carries out the reaction an aldehyde + NAD(+) + H2O = a carboxylate + NADH + 2 H(+). Could be involved in facilitating the biotrophic relationship between the plant and the rust fungus. The chain is Probable aldehyde dehydrogenase (FIS1) from Linum usitatissimum (Flax).